The primary structure comprises 21 residues: Serine protease inhibitor 3 (21 aa).

This sequence belongs to the protease inhibitor I3 (leguminous Kunitz-type inhibitor) family. As to expression, tubers.

It localises to the vacuole. Its function is as follows. Inhibits trypsin and chymotrypsin (serine proteases). Does not inhibit elastase, subtilisin, cathepsin L nor papain (serine and cysteine proteases). Protects the plant by inhibiting proteases of invading organisms, decreasing both hyphal growth and zoospores germination of Phytophthora infestans. In Solanum tuberosum (Potato), this protein is Serine protease inhibitor 3.